The sequence spans 716 residues: uncharacterized protein (716 aa).

Disordered regions lie at residues 84 to 103 and 153 to 189; these read SPSI…ERYP and VTDE…SQTQ. Ser97 carries the phosphoserine modification. Glycyl lysine isopeptide (Lys-Gly) (interchain with G-Cter in SUMO2) cross-links involve residues Lys201, Lys204, Lys237, Lys283, and Lys626.

This is an uncharacterized protein from Homo sapiens (Human).